The chain runs to 324 residues: Heparan sulfate 2-O-sulfotransferase hst-2 (324 aa).

Over 1 to 6 the chain is Cytoplasmic; it reads MLWKKR. Residues 7–24 form a helical; Signal-anchor for type II membrane protein membrane-spanning segment; that stretch reads KVLYFAGISVFILILLLL. Residues 25–324 lie on the Lumenal side of the membrane; the sequence is KLNSKPKANV…QYHFEKIKPS (300 aa). N-linked (GlcNAc...) asparagine glycans are attached at residues Asn75 and Asn94. Residues His107 and His109 contribute to the active site. Asn161 carries N-linked (GlcNAc...) asparagine glycosylation. Intrachain disulfides connect Cys167–Cys175 and Cys188–Cys194.

The protein belongs to the sulfotransferase 3 family. As to quaternary structure, homotrimer. Present in the hypodermis, muscle, distal tip cells (DTCs) and in neurons (at protein level).

The protein localises to the golgi apparatus membrane. In terms of biological role, catalyzes the transfer of sulfate to the C2-position of selected hexuronic acid residues within the maturing heparan sulfate (HS). Involved in cell adhesion and guidance by specifically modifying proteoglycans in the extracellular matrix and on the cell surface that are essential for axon migrations. The protein is Heparan sulfate 2-O-sulfotransferase hst-2 of Caenorhabditis elegans.